A 361-amino-acid chain; its full sequence is Mannose-1-phosphate guanyltransferase (361 aa).

It belongs to the transferase hexapeptide repeat family.

It is found in the cytoplasm. The catalysed reaction is alpha-D-mannose 1-phosphate + GTP + H(+) = GDP-alpha-D-mannose + diphosphate. The protein operates within nucleotide-sugar biosynthesis; GDP-alpha-D-mannose biosynthesis; GDP-alpha-D-mannose from alpha-D-mannose 1-phosphate (GTP route): step 1/1. In terms of biological role, involved in cell wall synthesis where it is required for glycosylation. Involved in cell cycle progression through cell-size checkpoint. This is Mannose-1-phosphate guanyltransferase (MPG1) from Eremothecium gossypii (strain ATCC 10895 / CBS 109.51 / FGSC 9923 / NRRL Y-1056) (Yeast).